A 160-amino-acid polypeptide reads, in one-letter code: MSKHPMTVEGAEALKAELHRLKFVDRPRIVEAIATARAHGDLKENAEYHAAREQQSFNEGRIQELEAKLSHAQIIDISKLPNNGKVIFGSTVTICHVATGSELTYKIVGEDEADIKLNKISYSSPIARALIGKELDDAVTVETPGGMVEYEIIQVQYIVE.

Residues 50-70 are a coiled coil; it reads AAREQQSFNEGRIQELEAKLS.

Belongs to the GreA/GreB family.

Necessary for efficient RNA polymerase transcription elongation past template-encoded arresting sites. The arresting sites in DNA have the property of trapping a certain fraction of elongating RNA polymerases that pass through, resulting in locked ternary complexes. Cleavage of the nascent transcript by cleavage factors such as GreA or GreB allows the resumption of elongation from the new 3'terminus. GreA releases sequences of 2 to 3 nucleotides. The sequence is that of Transcription elongation factor GreA from Legionella pneumophila (strain Paris).